A 173-amino-acid polypeptide reads, in one-letter code: Large ribosomal subunit protein uL22c (173 aa).

Belongs to the universal ribosomal protein uL22 family. Part of the 50S ribosomal subunit.

The protein resides in the plastid. The protein localises to the chloroplast. Its function is as follows. This protein binds specifically to 23S rRNA. In terms of biological role, the globular domain of the protein is located near the polypeptide exit tunnel on the outside of the subunit, while an extended beta-hairpin is found that lines the wall of the exit tunnel in the center of the 70S ribosome. In Drimys granadensis, this protein is Large ribosomal subunit protein uL22c (rpl22).